We begin with the raw amino-acid sequence, 197 residues long: MKLASLLVGSLMLAVPALAFEQSAIQTLRDATTATGAYHSKFPHALSEGPEAAISNINSATARAADEAKTAMTGLTVQSQSLAGALKGVSWISPHVLVVLFMPKYGVLTMFVWQFFDAMTTLSHDATNPAVFCSKNIDRLGPSMGWNLRLPHATTLKRDCKDGEKLVADLAGSYKIAVDSLEQAQAMLESPQGKCKQ.

A signal peptide spans 1–19 (MKLASLLVGSLMLAVPALA).

The protein localises to the secreted. This is an uncharacterized protein from Arthroderma benhamiae (strain ATCC MYA-4681 / CBS 112371) (Trichophyton mentagrophytes).